A 447-amino-acid chain; its full sequence is Secretin receptor (447 aa).

The first 28 residues, 1 to 28 (MLSTMSPRLSLLLLWLLLLINAAHPVGA), serve as a signal peptide directing secretion. Topologically, residues 29–140 (LPRLCDVRRV…NERRHAYLLK (112 aa)) are extracellular. Intrachain disulfides connect Cys46–Cys74, Cys65–Cys106, and Cys88–Cys122. Asn71, Asn99, Asn105, and Asn127 each carry an N-linked (GlcNAc...) asparagine glycan. The chain crosses the membrane as a helical span at residues 141 to 166 (LKVMYTVGYSSSLAMLLVALSILCSF). The Cytoplasmic segment spans residues 167–173 (RRLHCTR). The chain crosses the membrane as a helical span at residues 174 to 194 (NYIHMHLFVSFILRALSNFIK). The Extracellular portion of the chain corresponds to 195-215 (DAVLFPADDVTYCDAHRAGCK). Cys214 and Cys284 form a disulfide bridge. A helical membrane pass occupies residues 216–238 (LVMIFFQYCIMANYAWLLVEGLY). The Cytoplasmic portion of the chain corresponds to 239–253 (LHTLLAISFFSERKC). The helical transmembrane segment at 254–275 (LQAFVLFGWGSPAIFVALWAVT) threads the bilayer. The Extracellular segment spans residues 276–290 (RHFLEDFGCWDINSN). Residue Asn290 is glycosylated (N-linked (GlcNAc...) asparagine). A helical membrane pass occupies residues 291-314 (ASIWWVIRGPVILSIVINFIFFIN). Residues 315-339 (ILRILMRKLRTQETRGNETHHYKRL) are Cytoplasmic-facing. Residues 340–355 (AKSTLLLIPLFGIHYI) form a helical membrane-spanning segment. Residues 356–366 (VFAFSPEGAME) lie on the Extracellular side of the membrane. A helical transmembrane segment spans residues 367-390 (VQLFFELALGSFQGLVVAVLYCFL). Residues 391–447 (NGELEVQKKWRQWHLQEFPLRPVALSNSFSNATNGPTHSTKAGTSEQSRSIPGANVI) lie on the Cytoplasmic side of the membrane. Positions 423 to 440 (TNGPTHSTKAGTSEQSRS) are enriched in polar residues. The tract at residues 423–447 (TNGPTHSTKAGTSEQSRSIPGANVI) is disordered.

This sequence belongs to the G-protein coupled receptor 2 family. Phosphorylated on Ser and Thr residues at the cytoplasmic C-terminus by G protein-coupled receptor kinases (GRKs). In brain, expressed in the hippocampal CA1 region, the lower layer of cerebral cortex, the anterior olfactory nuclei, the anterior ventrolateral thalamus, the lateral region of hypothalamus, substantia nigra, tegmental area and central nucleus of the inferior colliculus, the ventral supramamillary nucleus and the cerebellum. Expressed in brown adipocytes: expression predominates in mature brown adipocytes (at protein level). Detected in the renal medulla, where it localized predominantly on the basolateral membranes of cells in the collecting ducts (blue arrow) and the ascending thick segments of the loop of Henle.

Its subcellular location is the cell membrane. It localises to the basolateral cell membrane. In terms of biological role, g protein-coupled receptor activated by secretin (SCT), which is involved in different processes such as regulation of the pH of the duodenal content, food intake and water homeostasis. Ligand binding causes a conformation change that triggers signaling via guanine nucleotide-binding proteins (G proteins) and activates cAMP-dependent pathway. Upon binding to secretin, regulates the pH of the duodenum by (1) inhibiting the secretion of gastric acid from the parietal cells of the stomach and (2) stimulating the production of bicarbonate (NaHCO(3)) from the ductal cells of the pancreas. In addition to regulating the pH of the duodenal content, plays a central role in diet induced thermogenesis: acts as a non-sympathetic brown fat (BAT) activator mediating prandial thermogenesis, which consequentially induces satiation. Mechanistically, secretin released by the gut after a meal binds to secretin receptor (SCTR) in brown adipocytes, activating brown fat thermogenesis by stimulating lipolysis, which is sensed in the brain and promotes satiation. Also able to stimulate lipolysis in white adipocytes. Also plays an important role in cellular osmoregulation by regulating renal water reabsorption. Also plays a role in the central nervous system: required for synaptic plasticity. The protein is Secretin receptor of Mus musculus (Mouse).